The following is a 295-amino-acid chain: MSIDINNRLYTALVTPMFVDGSIDWGSFENLLRIQEYQGCGILILGSTGEALALDFDEQCEVVRFVTNLNLNVPIMVGVGGFQLTKQLQWIEFCQTQRVDCFLVVTPLYAKPGSASQTSWFKTVLDKAERPCMLYNVPSRTGVNLAEEVLTSLKDHPNLWALKEASGDIQRCARYQELAPNLVIYSGEDGLLPELADVGVKGLVSVISNIWPEQTKEYVKQSLAHQIAITDKVIWEVATRSCFSVTNPIPVKAWLAYSGVITTNTLRAPLLANELEDLSLLIGADSLVKDWFSHI.

T48 contributes to the pyruvate binding site. Y135 functions as the Proton donor/acceptor in the catalytic mechanism. Residue K163 is the Schiff-base intermediate with substrate of the active site. A pyruvate-binding site is contributed by V204.

Belongs to the DapA family. In terms of assembly, homotetramer; dimer of dimers.

The protein resides in the cytoplasm. It carries out the reaction L-aspartate 4-semialdehyde + pyruvate = (2S,4S)-4-hydroxy-2,3,4,5-tetrahydrodipicolinate + H2O + H(+). The protein operates within amino-acid biosynthesis; L-lysine biosynthesis via DAP pathway; (S)-tetrahydrodipicolinate from L-aspartate: step 3/4. Its function is as follows. Catalyzes the condensation of (S)-aspartate-beta-semialdehyde [(S)-ASA] and pyruvate to 4-hydroxy-tetrahydrodipicolinate (HTPA). This chain is 4-hydroxy-tetrahydrodipicolinate synthase, found in Francisella philomiragia subsp. philomiragia (strain ATCC 25017 / CCUG 19701 / FSC 153 / O#319-036).